The chain runs to 123 residues: UPF0738 protein BCG9842_B4089 (123 aa).

Belongs to the UPF0738 family.

The protein is UPF0738 protein BCG9842_B4089 of Bacillus cereus (strain G9842).